Reading from the N-terminus, the 95-residue chain is Histone-like DNA-binding protein (95 aa).

This sequence belongs to the bacterial histone-like protein family.

The sequence is that of Histone-like DNA-binding protein from Rickettsia rickettsii.